A 112-amino-acid polypeptide reads, in one-letter code: Putative pterin-4-alpha-carbinolamine dehydratase (112 aa).

This sequence belongs to the pterin-4-alpha-carbinolamine dehydratase family.

It carries out the reaction (4aS,6R)-4a-hydroxy-L-erythro-5,6,7,8-tetrahydrobiopterin = (6R)-L-erythro-6,7-dihydrobiopterin + H2O. The sequence is that of Putative pterin-4-alpha-carbinolamine dehydratase from Shewanella woodyi (strain ATCC 51908 / MS32).